We begin with the raw amino-acid sequence, 25 residues long: Defensin D3 (25 aa).

Belongs to the DEFL family. Group IV subfamily. As to expression, distributed in the epidermal cell layer of leaves and in the subepidermal layer region of stems. Not in roots.

It localises to the secreted. Its subcellular location is the cell wall. Its function is as follows. Antimicrobial peptide. Active against Fusarium spp., Gram-positive and Gram-negative bacterial pathogens. The protein is Defensin D3 of Spinacia oleracea (Spinach).